A 489-amino-acid polypeptide reads, in one-letter code: Betaine aldehyde dehydrogenase (489 aa).

The K(+) site is built by T26 and D93. Residue 150 to 152 (GAW) participates in NAD(+) binding. The Charge relay system role is filled by K162. Residue 176 to 179 (KPSE) coordinates NAD(+). V180 is a K(+) binding site. NAD(+) is bound at residue 229–232 (GVET). L245 serves as a coordination point for K(+). Residue E251 is the Proton acceptor of the active site. NAD(+) is bound by residues G253, C285, and E386. C285 (nucleophile) is an active-site residue. C285 carries the cysteine sulfenic acid (-SOH) modification. K(+)-binding residues include K456 and G459. The active-site Charge relay system is the E463.

The protein belongs to the aldehyde dehydrogenase family. As to quaternary structure, dimer of dimers. K(+) serves as cofactor.

It catalyses the reaction betaine aldehyde + NAD(+) + H2O = glycine betaine + NADH + 2 H(+). Its pathway is amine and polyamine biosynthesis; betaine biosynthesis via choline pathway; betaine from betaine aldehyde: step 1/1. Involved in the biosynthesis of the osmoprotectant glycine betaine. Catalyzes the irreversible oxidation of betaine aldehyde to the corresponding acid. The chain is Betaine aldehyde dehydrogenase from Burkholderia cenocepacia (strain ATCC BAA-245 / DSM 16553 / LMG 16656 / NCTC 13227 / J2315 / CF5610) (Burkholderia cepacia (strain J2315)).